The chain runs to 439 residues: Hemagglutinin-esterase (439 aa).

Residues 1–22 form the signal peptide; the sequence is MGSMCIAMAPRTLLLLIGCQLA. An esterase domain 1 region spans residues 12–132; the sequence is TLLLLIGCQL…DNKRWMGNKA (121 aa). The Virion surface segment spans residues 23–407; the sequence is LGFNEPLNVV…PVCLYDPLPV (385 aa). Residue Ser-45 is the Nucleophile of the active site. Cys-49 and Cys-70 are joined by a disulfide. Asn-94, Asn-152, Asn-196, Asn-246, and Asn-316 each carry an N-linked (GlcNAc...) asparagine; by host glycan. The cysteines at positions 118 and 167 are disulfide-linked. The segment at 133–281 is receptor binding; sequence RFYALVYKKM…GNYKAVSLEY (149 aa). Intrachain disulfides connect Cys-202/Cys-291 and Cys-210/Cys-264. Residues 282 to 395 form an esterase domain 2 region; the sequence is LLTIPSKAIC…QCPTAANIEF (114 aa). The cysteines at positions 322 and 327 are disulfide-linked. N-linked (GlcNAc...) asparagine; by host glycosylation is found at Asn-331 and Asn-337. Residues Asp-342 and His-345 each act as charge relay system in the active site. 2 N-linked (GlcNAc...) asparagine; by host glycosylation sites follow: Asn-360 and Asn-374. The cysteines at positions 363 and 387 are disulfide-linked. Residues 408–428 traverse the membrane as a helical segment; sequence ILLGVLLGIAVLIIVFLLFYF. Residues 429 to 439 lie on the Intravirion side of the membrane; it reads MTDSGVRLHEA.

Belongs to the influenza type C/coronaviruses hemagglutinin-esterase family. Homodimer; disulfide-linked. Forms a complex with the M protein in the pre-Golgi. Associates then with S-M complex to form a ternary complex S-M-HE. In terms of processing, N-glycosylated in the host RER.

Its subcellular location is the virion membrane. It is found in the host cell membrane. It carries out the reaction N-acetyl-9-O-acetylneuraminate + H2O = N-acetylneuraminate + acetate + H(+). The enzyme catalyses N-acetyl-4-O-acetylneuraminate + H2O = N-acetylneuraminate + acetate + H(+). Functionally, structural protein that makes short spikes at the surface of the virus. Contains receptor binding and receptor-destroying activities. Mediates de-O-acetylation of N-acetyl-4-O-acetylneuraminic acid, which is probably the receptor determinant recognized by the virus on the surface of erythrocytes and susceptible cells. This receptor-destroying activity is important for virus release as it probably helps preventing self-aggregation and ensures the efficient spread of the progeny virus from cell to cell. May serve as a secondary viral attachment protein for initiating infection, the spike protein being the major one. May become a target for both the humoral and the cellular branches of the immune system. This Puffinosis coronavirus (PV) protein is Hemagglutinin-esterase.